The chain runs to 246 residues: Bis(5'-nucleosyl)-tetraphosphatase PrpE [asymmetrical] (246 aa).

The protein belongs to the PrpE family. Ni(2+) is required as a cofactor.

It carries out the reaction P(1),P(4)-bis(5'-guanosyl) tetraphosphate + H2O = GMP + GTP + 2 H(+). Functionally, asymmetrically hydrolyzes Ap4p to yield AMP and ATP. This Bacillus thuringiensis subsp. konkukian (strain 97-27) protein is Bis(5'-nucleosyl)-tetraphosphatase PrpE [asymmetrical].